The chain runs to 1023 residues: RTX-I toxin determinant A from serotypes 1/9 (1023 aa).

3 helical membrane-spanning segments follow: residues 226–256, 297–326, and 367–406; these read NNLP…ILSN, STTA…ADKF, and INSV…SGIL. 6 Hemolysin-type calcium-binding repeats span residues 730-747, 748-765, 766-783, 784-801, 812-829, and 830-847; these read FGSR…DDEI, YGND…NDVI, HGGD…NDRL, IGGK…DDEL, LGGA…TNLF, and DGGV…KDIY.

The protein belongs to the RTX prokaryotic toxin (TC 1.C.11) family. Palmitoylated by ApxIC. The toxin only becomes active when modified.

Its subcellular location is the secreted. The protein localises to the host cell membrane. In terms of biological role, one of the virulence factors of A.pleuropneumoniae, which has a strong hemolytic activity and is cytotoxic for alveolar macrophages and neutrophils. This chain is RTX-I toxin determinant A from serotypes 1/9 (apxIA), found in Actinobacillus pleuropneumoniae (Haemophilus pleuropneumoniae).